We begin with the raw amino-acid sequence, 234 residues long: Large ribosomal subunit protein uL1 (234 aa).

Belongs to the universal ribosomal protein uL1 family. As to quaternary structure, part of the 50S ribosomal subunit.

Its function is as follows. Binds directly to 23S rRNA. The L1 stalk is quite mobile in the ribosome, and is involved in E site tRNA release. In terms of biological role, protein L1 is also a translational repressor protein, it controls the translation of the L11 operon by binding to its mRNA. This Tolumonas auensis (strain DSM 9187 / NBRC 110442 / TA 4) protein is Large ribosomal subunit protein uL1.